Consider the following 341-residue polypeptide: Holliday junction branch migration complex subunit RuvB (341 aa).

The interval 1 to 180 is large ATPase domain (RuvB-L); sequence MAKSHTLNPE…FGIQLRLDYY (180 aa). Positions 19, 20, 61, 64, 65, 66, 170, 180, and 217 each coordinate ATP. Thr-65 contributes to the Mg(2+) binding site. The interval 181 to 251 is small ATPAse domain (RuvB-S); it reads NDEEMKEIVL…LCLKAFEKMG (71 aa). A head domain (RuvB-H) region spans residues 254–341; sequence DLGLDGMDRQ…ENHGQDPTLF (88 aa). 2 residues coordinate DNA: Arg-309 and Arg-314.

The protein belongs to the RuvB family. As to quaternary structure, homohexamer. Forms an RuvA(8)-RuvB(12)-Holliday junction (HJ) complex. HJ DNA is sandwiched between 2 RuvA tetramers; dsDNA enters through RuvA and exits via RuvB. An RuvB hexamer assembles on each DNA strand where it exits the tetramer. Each RuvB hexamer is contacted by two RuvA subunits (via domain III) on 2 adjacent RuvB subunits; this complex drives branch migration. In the full resolvosome a probable DNA-RuvA(4)-RuvB(12)-RuvC(2) complex forms which resolves the HJ.

The protein localises to the cytoplasm. It catalyses the reaction ATP + H2O = ADP + phosphate + H(+). The RuvA-RuvB-RuvC complex processes Holliday junction (HJ) DNA during genetic recombination and DNA repair, while the RuvA-RuvB complex plays an important role in the rescue of blocked DNA replication forks via replication fork reversal (RFR). RuvA specifically binds to HJ cruciform DNA, conferring on it an open structure. The RuvB hexamer acts as an ATP-dependent pump, pulling dsDNA into and through the RuvAB complex. RuvB forms 2 homohexamers on either side of HJ DNA bound by 1 or 2 RuvA tetramers; 4 subunits per hexamer contact DNA at a time. Coordinated motions by a converter formed by DNA-disengaged RuvB subunits stimulates ATP hydrolysis and nucleotide exchange. Immobilization of the converter enables RuvB to convert the ATP-contained energy into a lever motion, pulling 2 nucleotides of DNA out of the RuvA tetramer per ATP hydrolyzed, thus driving DNA branch migration. The RuvB motors rotate together with the DNA substrate, which together with the progressing nucleotide cycle form the mechanistic basis for DNA recombination by continuous HJ branch migration. Branch migration allows RuvC to scan DNA until it finds its consensus sequence, where it cleaves and resolves cruciform DNA. In Leptospira borgpetersenii serovar Hardjo-bovis (strain L550), this protein is Holliday junction branch migration complex subunit RuvB.